Consider the following 622-residue polypeptide: Pheromone-regulated protein PRM7 (622 aa).

Disordered regions lie at residues 1–35 (MYRT…SAVT), 47–200 (STSV…TISA), and 374–405 (LTPV…SKTQ). Over residues 14-35 (TDPTSSSDVATSADPTSSSAVT) the composition is skewed to polar residues. 2 stretches are compositionally biased toward low complexity: residues 47 to 199 (STSV…VTIS) and 379 to 389 (SASSSRSSATS). The segment covering 396–405 (PVSSNDSKTQ) has biased composition (polar residues).

The sequence is that of Pheromone-regulated protein PRM7 (PRM7) from Saccharomyces cerevisiae (strain YJM789) (Baker's yeast).